The primary structure comprises 185 residues: MNSMSFLISTLFDLYIMVVILRIWLQAARADFYNPFSQFIVKATQPVIGPLRRIIPSVGNIDLATVLFAYVLCVLKFVVLILIASNGSVSFSADFLFLGLLSLIKAAGGLLFWVLLIRAILSWVSQGRSPIEYVFHQLTEPMCAPIRRIIPAIGGLDLSVLVLFIGLQFANFLMGDIIGPIWFQL.

4 helical membrane passes run 5-25 (SFLISTLFDLYIMVVILRIWL), 63-83 (LATVLFAYVLCVLKFVVLILI), 97-117 (FLGLLSLIKAAGGLLFWVLLI), and 149-169 (IIPAIGGLDLSVLVLFIGLQF).

The protein belongs to the YggT family.

It localises to the cell membrane. This is an uncharacterized protein from Vibrio alginolyticus.